We begin with the raw amino-acid sequence, 634 residues long: Kinesin-like protein KIF22 (634 aa).

One can recognise a Kinesin motor domain in the interval 19–345 (RVRVAVRLRP…LNFAAKSKQI (327 aa)). An ATP-binding site is contributed by 103 to 110 (GPTGAGKT). The disordered stretch occupies residues 357-406 (APTIAPGKRTREEQEAGGSGEPQNKRSKEGKKAEHSPSPPLHPQSSPDSS). Positions 379–391 (QNKRSKEGKKAEH) are enriched in basic and acidic residues. Residues 421-471 (SAERERLNLLKTVAQSRKEIQMLKEKQKELEDKANMFNKQKETTEKESKDA) adopt a coiled-coil conformation.

Belongs to the TRAFAC class myosin-kinesin ATPase superfamily. Kinesin family. In terms of processing, ubiquitinated, leading to its subsequent proteasomal degradation.

Its subcellular location is the nucleus. The protein resides in the cytoplasm. The protein localises to the cytoskeleton. Kinesin family member that is involved in spindle formation and the movements of chromosomes during mitosis and meiosis. Binds to microtubules and to DNA. The protein is Kinesin-like protein KIF22 (kif22) of Danio rerio (Zebrafish).